The chain runs to 429 residues: Serine hydroxymethyltransferase (429 aa).

A (6S)-5,6,7,8-tetrahydrofolate-binding site is contributed by 120–122 (GHI). Lys226 carries the post-translational modification N6-(pyridoxal phosphate)lysine.

The protein belongs to the SHMT family. In terms of assembly, homodimer. Pyridoxal 5'-phosphate serves as cofactor.

Its subcellular location is the cytoplasm. It functions in the pathway amino-acid biosynthesis; glycine biosynthesis; glycine from L-serine: step 1/1. In terms of biological role, catalyzes the reversible interconversion of serine and glycine with a modified folate serving as the one-carbon carrier. Also exhibits a pteridine-independent aldolase activity toward beta-hydroxyamino acids, producing glycine and aldehydes, via a retro-aldol mechanism. In Pyrobaculum arsenaticum (strain DSM 13514 / JCM 11321 / PZ6), this protein is Serine hydroxymethyltransferase.